The sequence spans 697 residues: Methionine--tRNA ligase (697 aa).

The 'HIGH' region motif lies at 11 to 21 (PYANGPIHLGH). Zn(2+)-binding residues include cysteine 142, cysteine 145, cysteine 155, and cysteine 158. Residues 343 to 347 (KMSKS) carry the 'KMSKS' region motif. An ATP-binding site is contributed by lysine 346. In terms of domain architecture, tRNA-binding spans 595 to 697 (DFMKVEMTVA…DECKVGDKLA (103 aa)).

The protein belongs to the class-I aminoacyl-tRNA synthetase family. MetG type 1 subfamily. In terms of assembly, homodimer. Zn(2+) is required as a cofactor.

The protein resides in the cytoplasm. The enzyme catalyses tRNA(Met) + L-methionine + ATP = L-methionyl-tRNA(Met) + AMP + diphosphate. Functionally, is required not only for elongation of protein synthesis but also for the initiation of all mRNA translation through initiator tRNA(fMet) aminoacylation. This Psychrobacter sp. (strain PRwf-1) protein is Methionine--tRNA ligase.